We begin with the raw amino-acid sequence, 407 residues long: Vancomycin aglycone glucosyltransferase (407 aa).

It belongs to the glycosyltransferase 28 family.

It carries out the reaction vancomycin aglycone + UDP-alpha-D-glucose = devancoaminyl-vancomycin + UDP. The protein operates within antibiotic biosynthesis; vancomycin biosynthesis. Functionally, glucosyltransferase that transfers glucose to the 4-OH-Phegly(4) residue of vancomycin aglycone (AGV) to produce devancoaminyl-vancomycin (DVV) in the biosynthesis of glycopeptide antibiotic chloroeremomycin, a member of the vancomycin group of antibiotics. This Amycolatopsis orientalis (Nocardia orientalis) protein is Vancomycin aglycone glucosyltransferase (gtfB).